The chain runs to 464 residues: Fumarate hydratase class II (464 aa).

Substrate contacts are provided by residues 98 to 100 (SGT), 129 to 132 (HPND), 139 to 141 (SSN), and Thr187. His188 serves as the catalytic Proton donor/acceptor. Ser318 is a catalytic residue. Substrate-binding positions include Ser319 and 324–326 (KVN).

Belongs to the class-II fumarase/aspartase family. Fumarase subfamily. As to quaternary structure, homotetramer.

The protein resides in the cytoplasm. The enzyme catalyses (S)-malate = fumarate + H2O. It functions in the pathway carbohydrate metabolism; tricarboxylic acid cycle; (S)-malate from fumarate: step 1/1. Functionally, involved in the TCA cycle. Catalyzes the stereospecific interconversion of fumarate to L-malate. The sequence is that of Fumarate hydratase class II from Haemophilus ducreyi (strain 35000HP / ATCC 700724).